We begin with the raw amino-acid sequence, 249 residues long: 2,3-bisphosphoglycerate-dependent phosphoglycerate mutase (249 aa).

Substrate is bound by residues Arg8–Asn15, Thr21–Gly22, Arg60, Glu87–Tyr90, Lys98, Arg114–Arg115, and Gly183–Asn184. His9 (tele-phosphohistidine intermediate) is an active-site residue. Catalysis depends on Glu87, which acts as the Proton donor/acceptor.

Belongs to the phosphoglycerate mutase family. BPG-dependent PGAM subfamily.

It carries out the reaction (2R)-2-phosphoglycerate = (2R)-3-phosphoglycerate. Its pathway is carbohydrate degradation; glycolysis; pyruvate from D-glyceraldehyde 3-phosphate: step 3/5. In terms of biological role, catalyzes the interconversion of 2-phosphoglycerate and 3-phosphoglycerate. This Methanoregula boonei (strain DSM 21154 / JCM 14090 / 6A8) protein is 2,3-bisphosphoglycerate-dependent phosphoglycerate mutase.